The chain runs to 429 residues: MSKSLQAIRGMNDILPEQTPLWRHFEGTVARLLDNYGYRQIRMPIVEFTELFKRSIGEVTDIVEKEMYTFADRNGDSLTLRPEGTAACVRAVLEHGITGGGQVQKLWYIGPMFRHERPQKGRYRQFHQIGVEVFNLDGPDIDAELIVMTWRLWGLLGIRDAVKLELNSLGTSEARARYREALVEYLSARLDQLDEDSQRRLKTNPLRVLDTKHPETQAVLVDAPKLADYLDDESRVHFEGLKARLDAAGIPYVINPKLVRGLDYYSKTVFEWVTDQLGAQGTVCAGGRYDGLVEQMGGKPTAGVGFAMGIERLVLLLETLEQVPEEIARQVDVYLCAFGEAAELAALALTEKVRDQLPTLRLQVNAGAGSFKSQFKKADKSGALYALILGEEELAAKVIGVKPLRGQGEQQNIAWDALSEHLASCVVQG.

The protein belongs to the class-II aminoacyl-tRNA synthetase family. In terms of assembly, homodimer.

The protein localises to the cytoplasm. It catalyses the reaction tRNA(His) + L-histidine + ATP = L-histidyl-tRNA(His) + AMP + diphosphate + H(+). The chain is Histidine--tRNA ligase from Pseudomonas syringae pv. syringae (strain B728a).